A 757-amino-acid polypeptide reads, in one-letter code: Vitamin K-dependent gamma-carboxylase (757 aa).

A2 bears the N-acetylalanine mark. At 2 to 60 (AVHRGSALVAPASDKVQKNKSAQTSGLKQGSRMEKILGFEWTDLSSWQSVVTLLNKPTD) the chain is on the cytoplasmic side. The chain crosses the membrane as a helical span at residues 61–81 (PANLAVFRFLFAFLMLLDIPQ). Residues 82–113 (ERGLSSLDRKYLDGLDVCRFPLLDALRPLPLD) are Lumenal-facing. C99 and C450 are oxidised to a cystine. The chain crosses the membrane as a helical span at residues 114 to 134 (WMYLVYTIMFLGALGMMLGLC). Residues 135 to 136 (YR) lie on the Cytoplasmic side of the membrane. Residues 137–157 (LSCVLFLLPYWYVFLLDKTSW) traverse the membrane as a helical segment. The Lumenal segment spans residues 158–292 (NNHSYLYGLL…VSYFHCMNSQ (135 aa)). A helical transmembrane segment spans residues 293 to 313 (LFSIGMFPYVMLASSPLFCSA). The Cytoplasmic portion of the chain corresponds to 314 to 361 (EWPRKLVARCPKRLQELLPTKAAPRPSASCVYKRSRGKAGPKPGLRHQ). Residues 362-382 (LGAIFTLLYLLEQLFLPYSHF) form a helical membrane-spanning segment. Residues 383-757 (LTQGYNNWTN…PDSEHVHSEF (375 aa)) lie on the Lumenal side of the membrane. The disordered stretch occupies residues 729 to 757 (EPVDESSASNTDSSNHPSEPDSEHVHSEF). Residues 734 to 745 (SSASNTDSSNHP) are compositionally biased toward polar residues. The segment covering 746 to 757 (SEPDSEHVHSEF) has biased composition (basic and acidic residues).

The protein belongs to the vitamin K-dependent gamma-carboxylase family. In terms of assembly, monomer. May interact with CALU.

It is found in the endoplasmic reticulum membrane. It catalyses the reaction 4-carboxy-L-glutamyl-[protein] + 2,3-epoxyphylloquinone + H2O + H(+) = phylloquinol + L-glutamyl-[protein] + CO2 + O2. Functionally, mediates the vitamin K-dependent carboxylation of glutamate residues to calcium-binding gamma-carboxyglutamate (Gla) residues with the concomitant conversion of the reduced hydroquinone form of vitamin K to vitamin K epoxide. Catalyzes gamma-carboxylation of various proteins, such as blood coagulation factors (F2, F7, F9 and F10), osteocalcin (bglap and bglap2) or matrix Gla protein (MGP). The polypeptide is Vitamin K-dependent gamma-carboxylase (Ggcx) (Mus musculus (Mouse)).